We begin with the raw amino-acid sequence, 500 residues long: NAD(P)H-quinone oxidoreductase chain 4, chloroplastic (500 aa).

A run of 14 helical transmembrane segments spans residues 4–24, 37–57, 84–104, 111–129, 134–154, 167–187, 208–228, 242–262, 272–292, 305–325, 330–350, 374–396, 411–431, and 462–482; these read FPWL…IFFL, ICIC…HFQL, GLSI…TLAA, SRLF…IGSF, LLLF…LLSM, FILY…GMGL, ALEI…SPII, HYST…YGLV, AHSI…IYAA, IAYS…SITD, GAIL…FLAG, IFTM…GFVA, FFMP…LTPI, and LFVS…PDFV.

It belongs to the complex I subunit 4 family.

The protein resides in the plastid. Its subcellular location is the chloroplast thylakoid membrane. It catalyses the reaction a plastoquinone + NADH + (n+1) H(+)(in) = a plastoquinol + NAD(+) + n H(+)(out). It carries out the reaction a plastoquinone + NADPH + (n+1) H(+)(in) = a plastoquinol + NADP(+) + n H(+)(out). The protein is NAD(P)H-quinone oxidoreductase chain 4, chloroplastic of Chloranthus spicatus (Chulantree).